Here is a 5588-residue protein sequence, read N- to C-terminus: MDSQKPPAEDKDSDPAADGLAAPEKPGATEPDLPILCIGEVSVPGSGGSRPQKPPHDCSRGPARRCALCNCGEPGLHGQRELQRFELPSDWPGFPVVPSGGNSGPCEAVLPKEDASQIGFPEGLTPAHLGEPGGHCWAHHWCAAWSAGVWGQEGPELCGVDKAIFSGISQRCSHCARFGASVPCRSPGCSRLYHFPCATASGSFLSMKTLQLLCPEHSDGAAHLEEARCAVCEGPGQLCDLLFCTSCGHHYHGACLDTALTARKRASWQCPECKVCQSCRKPGNDSKMLVCETCDKGYHTFCLKPPMEDLPAHSWKCKTCRLCRACGAGSAELNPNSEWFENYSLCHRCHKAQGSQPVTSVAEQHPAVCSRLSPPEPGEIPIDAPDALYVACQGQPKGGHVTSMQPKELAPLQCEAKPLGRAGTQLEAQLEAPLHEEMPLLPPPEESPLSPPPEESPTSPPPEASRLSPPTEESPLSPPPESSPFSPLEGCPPSPALDTPLSPPPEASPLSPPFEESPLSPPPEELPSSPPPEASRLSPPPEESPMSPPPEESPMSPPPEASRLFPPFEESPLSPPPEDSPLSPPPEASRLSPPPEDSPMSPPPEDSPMSPPPEVSRFLPLPVLSHLSPLPEVSRLSPPPEESPLSPPPEDSPASPPPEASRLSPPPEDSPASPPPEASRLSRPREDSPASPPPEDSLVSLPMEESPLSPLPEELRLCPQPEEPYLSPQPEEPRLCPQPEELPLSPQSEEPCLSPVLVEPGPSSQPEEPHLSPVPQEPHLSPQPEEPHLSPQPQQLHLSPHSEEPCLSPMPEEPCLSPQPEELNGPPQPAEPPEEPSQSSAPKELSLFSPSGEPPLPPMLGEPALSEPGEPPLSPLPEELPLSLSGEPVLSPQLMPPDPLPPPLSPIIPAAAPPALSPLGELEYPFGAKGDSDPESPLAAPILETPISPPPEANCTDPEPVPPMILPPSPGSPLGPASPILMERLPPPCSPLLPHSLPPPTPPPSHCSPPALPLSVPSPLSPVQKAVDVSDEAELHEMETDKGPEPECPALEPRATSPLPSPLGDLSCPAPSPAPALDDFSGLGEDTAPLDGTGQMSGSLAGELKGSPVLLDPEELTPVTPMEVYGPECKQAGQGSPCEEQEEPGAPMAPMPPTLIKSDIVNEISNLSQGDASASFPGSEPLLGSPDPEGGGSLSMELGVSTDVSPARDEGSLRLCTDSLPETDDSLLCDTGTATSGGKAEGDKGRRRSSPARSRIKQGRSSSFPGRRRPRGGAAHGGRGRGRARLKSTTSSVETLVADIDSSPSKEEEEEDDDTMQNTVVLFSNTDKFVLMQDMCVVCGSFGRGAEGHLLACSQCSQCYHPYCVNSKITKVMLLKGWRCVECIVCEVCGQASDPSRLLLCDDCDISYHTYCLDPPLLTVPKGGWKCKWCVSCMQCGAASPGFHCEWQNSYTHCGPCASLVTCPVCHAPYVEEDLLIQCRHCERWMHAGCESLFTEDEVEQAADEGFDCVSCQPYVVKPVVPVAPPELVPVKVKEPEPQFFRFEGVWLTETGMAVLRNLTMSPLHKRRQRRGRLGLPGEAGLEGSEPSDALGPDDKKDGDLDTDDLLKGEGGVEQMECEIKLEGPASPDVELGKEETEESKKRKRKPYRPGIGGFMVRQRKSHTRVKRGPAAQAEVLSGDGQPDEVMPADLPAEGSVEQSLAEGDEKKKQQRRARKKSKLEDMFPAYLQAAFFGKDLLDLSRKALFAVGVGRPGFGLGASKPRADGGSDRKELMTAMHKGDDGPDVADEESHGPEGTADLPGLEDGGVKASPVPSDPEKPGTPGEGVLSSDLDRIPTEELPKMESKDLQQLFKDVLGSEREQHLGCGTPGLEGGRTSLQRPFLQGGLALGSLPSSSPMDSYPGLCQSPFLDSRERGGFFSPEPGEPDSPWTGSGGTTPSTPTTPTTEGEGDGLSYNQRSLQRWEKDEELGQLSTISPVLYANINFPNLKQDYPDWSSRCKQIMKLWRKVPAADKAPYLQKAKDNRAAHRISKVQKQAESQISKQAKMGDIARKTDRPALHLRIPSQPGALGSPPPAAAPTIFLGSPTTPAGLSTSADGFLKPPAGTVPGPDSPGELFLKLPPQVPAQVPSQDPFGLAPAYAPEPRFSAAPPTYPPYPSPTGAPAQPPMLGTTTRPGTGQPGEFHTTPPGTPRHQPSTPDPFLKPRCPSLDNLAVPESPGVAGGKASEPLLSPPPFGESRKSLEVKKEELGASSPGYGPPNLGCVDSPSAGPHLGGLELKAPDVFKAPLTPRASQVEPQSPGLGLRAQEPPPAQALAPSPPSHPDVFRSGPYPDPYAQPPLTPRPQPPPPESCCAPPPRSLPSDPFSRVPASPQSQSSSQSPLTPRPLSAEAFCPSPVTPRFQSPDPYSRPPSRPQSRDPFAPLHKPPRPQPPEVAFKAGPLAHTPLGAGGFPAALPSGPAGELHAKVPSGQPTNFARSPGTGTFVGTPSPMRFTFPQGVGEPSLKPPVPQPGLPSPHGINSHFGPGPTLGKPQSTNYAVATGNFHPSGSPLGPNSGPTGEGYGLSPLRPASVLPPPAPDGSLPYLTHGASQRVGITSPVEKREDPGATMSSSSLATPELSSAQDAGISSLSQTELEKQRQRQRLRELLIRQQIQRNTLRQEKETAAAAAGAVGPPGNWGAEPSSPAFEQLSRGQTPFTGSQDRSSIVGLPASKLGGPTLGPGAFSSDDRLARPLPPATPSSMDMNSRQLVGGSQAFYQRTPYPGSLPLQQQQQQQQQQQQQQQQQQQQQQQQQQQQQLWQQQQQQQQQQQQQAAAAAAATSMRLAMSARFPSTPGPELGRQALGSPLAGIPTRLPGPAEPVPGPAGPAQFIELRHNVQKGLGPGVSPFPGQGPPQRPRFYPVSEELHRLAPEGLRGLAVPGLPSQKPSALPAPELNNSLHQTPHAKGPALASGLELVSRPPSNTELSRPPLALEAGKLPCEDPELDDDFDAHKALEDDEELAHLGLGVDVAKGDDELGTLENLETNDPHLDDLLNGDEFDLLAYTDPELDTGDKKDIFNEHLRLVESANEKAEREALLRGVEPVSLGPEERPPPAPDNSEPRLTSVLPEVKPKVEEGGRHPSPCQFTINTPKVEPAPPATSLSLGLKPGQTVMGTRDTRGGVGTGSFPSSGHTAEKGPFGATGGTPAHLLNPSSLSGPAASSLLEKFELESGALTLPSGHAAAGDELDKMESSLVASELPLLIEDLLEHEKKELQKKQQLSAQTVLPAQQQQQQQQQQQQQQQQHTLLPTPGPAQALPLPHEPGPPQQLALGIGSTRQPGLGQSMVPIQPPAHALQQRLAPSVAMVSNQGHMLSGQQAGQTGLVPQQSSQPVLAQKPMSAMPASMCMKPQQLAMQQQQLANSFFPDTDLDKFAAEDIIDPIAKAKMVALKGIKKVMAQGSIGVAPGMNRQQVSLLAQRLSGGSGSDLQNHVAPGSGQERNAGDPAQPRPNPPTFAQGVINEADQRQYEEWLFHTQQLLQMQLKVLEEQIGVHRKSRKALCAKQRTAKKAGREFPEADAEKLKLVTEQQSKIQKQLDQVRKQQKEHTNLMAEYRNKQQQQQQQQQQQQQQQHSAVLAVSPSQNPRVLTKLPGQLLPAHGLQPPQAPPGGQAGGLRLPPGGMVLPGQSGGPFLNTTLAQQQQQQHSGVAGSLTGPPGSFFPGNLALRSLGPDSRLLQERQLQLQQQRMQLAQKLQQQQQQQQQQQQQQHLLGQVAIQQQQGPGVQNQALGPKPQGLLPPSNHQGLLVQQLSPQQSQGSQGLLGPAQVTVLQQQQQQQQHSGALGPQGPHRQVLMTQSRVLSSPQLAQQGHSLMGHRLLTAQQQQQQQQQQQQQQQQQQQQQQQQQGSMTGLSQLQQGMMSHGGQPKMSAQALGSLQQQQQQLQQQQMLQQQQLQQQQQQLQQQQQQQQLQQQQQQQLQLQQQQQQQQQHLQHQQQQQQQLQQQQQLQQQQQQQLHLQQQLHQQQQLQLQQQQMGLLNQNRTLLSPQQQQQQQQQQQQQQQQQQQQQQQQQQVTLGPGLPVKPLQHFSSSGALGPTLLLTGKEQNNAETALPSEVTEGPSTHQGGPPAVGTAPEPMSVEPGEVKPSISGDSQLLLVQSQAQSQATSVQLQPPLRLPGQPQPQVNLLHTAGGGSHGQQLGSGSSSESPAVPHLLAQPSVSLGEQPGPMAQNLLGSQQPLGLDRPIQNNTGSQPPKSGPAPQSGQGPPGAGVMPTVGQLRAQLQGVLAKNPQLRHLSPQQQQQLQALLMQRQLQQSQAVRQTPPFQEPGTQPSPLQGLLGCQPQPGGFSVSQTGPLQELGAGSRPQGPPRLPVPQGALSTGPVLGPAHPTPPPSSPQEPKRPSQLPSPSAQLTPTHPGTPKPQGPALELPPGRVSPAAAQLADTFFGKGLGPWDPSDNLTEAQKPEQSSLVPGHLDQVNGQVVHEPSQLSIKQEPREEPCALGAQTVKREANGEPAGAPGTSNHLLLAGSRSEAGHLLLQKLLRAKNVQLGAGRGPEGLRAEINGHIDSKLSGLEQKLQGTSSNKEDAATRKPLPAKPKRVQKTSDRLPSSRKKLRKEDGVRANEALLKQLKQELSQLPLTEPTITANFSLFAPFGSGCLVSGQSQLRGAFGSGALHTGPDYYSQLLTKNNLSNPPTPPSSLPPTPPPSVQQKMVNGVTPSDELGERPKDTASAQDSEGALRDAAEVKSLDLLAALPTPPHNQTEDVRMESDEDSDSPDSIVPASSPESILGEEAPRFPQLGSGRWEQDNRALSPVIPIIPRTGIPVFPDTKPYGVLDLEVPGKLPATAWEKGKGSEVSVMLTVSAAAAKNLNGVMVAVAELLSMKIPNSYEVLFPDGPARAGLEPKKGEAEGPGGKEKGLSGKGPDTGPDWLKQFDAVLPGYTLKSQLDILSLLKQESPAPEPSIQHSYTYNVSNLDVRQLSAPPPEEPSPPPSPLAPSPASPPAEPMVELQAERPAEPPIPSPLPLASSPESARPKPRARPPEESEDSRPPRLKKWKGVRWKRLRLLLTIQKGSGHQEDEREVAEFMEQFGTALRPSKVPRDNRRCCFCHEEGDGATDGPARLLNLDLDLWVHLNCALWSTEVYETQGGALMNVEVALHRGLLTKCSLCQRTGATSSCNRMRCPNVYHFACAIRAKCMFFKDKTMLCPVHKIKGPCEQELSSFAVFRRVYIERDEVKQIASIIQRGERLHMFRVGGLVFHAIGQLLPHQMADFHSATALYPVGYEATRIYWSLRTNNRRCCYRCSISENNGRPEFVIKVIEQGLEDLVFTDASPQAVWNRIIEPVAAMRKEADMLRLFPEYLKGEELFGLTVHAVLRIAESLPGVESCQNYLFRYGRHPLMELPLMINPTGCARSEPKILTHYKRPHTLNSTSMSKAYQSTFTGETNTPYSKQFVHSKSSQYRRLRTEWKNNVYLARSRIQGLGLYAAKDLEKHTMVIEYIGTIIRNEVANRREKIYEEQNRGIYMFRINNEHVIDATLTGGPARYINHSCAPNCVAEVVTFDKEDKIIIISSRRIPKGEELTYDYQFDFEDDQHKIPCHCGAWNCRKWMN.

Residues 1–61 (MDSQKPPAED…QKPPHDCSRG (61 aa)) form a disordered region. A C2HC pre-PHD-type 1; degenerate zinc finger spans residues 104-149 (GPCEAVLPKEDASQIGFPEGLTPAHLGEPGGHCWAHHWCAAWSAGV). 2 consecutive PHD-type zinc fingers follow at residues 170 to 218 (QRCS…PEHS) and 270 to 323 (CPEC…CRLC). Residues 226–276 (EARCAVCEGPGQLCDLLFCTSCGHHYHGACLDTALTARKRASWQCPECKVC) form a PHD-type 2; degenerate zinc finger. The RING-type 1; atypical zinc-finger motif lies at 229–274 (CAVCEGPGQLCDLLFCTSCGHHYHGACLDTALTARKRASWQCPECK). The RING-type 2; degenerate zinc finger occupies 276 to 321 (CQSCRKPGNDSKMLVCETCDKGYHTFCLKPPMEDLPAHSWKCKTCR). Disordered stretches follow at residues 438 to 908 (MPLL…SPII) and 922 to 1315 (LEYP…DDDT). Residues 439–642 (PLLPPPEESP…VSRLSPPPEE (204 aa)) are 15 X 5 AA repeats of S/P-P-P-E/P-E/A. A compositionally biased stretch (pro residues) spans 440–463 (LLPPPEESPLSPPPEESPTSPPPE). Repeat copies occupy residues 442-446 (PPPEE), 460-464 (PPPEA), 469-473 (PPTEE), and 477-481 (SPPPE). Residues 464-475 (ASRLSPPTEESP) show a composition bias toward low complexity. Pro residues-rich tracts occupy residues 490–512 (GCPPSPALDTPLSPPPEASPLSP) and 519–560 (LSPP…PPPE). 4 repeat units span residues 520–524 (SPPPE), 529–533 (SPPPE), 538–542 (SPPPE), and 547–551 (SPPPE). Residues 561 to 572 (ASRLFPPFEESP) show a composition bias toward low complexity. Residues 573-614 (LSPPPEDSPLSPPPEASRLSPPPEDSPMSPPPEDSPMSPPPE) are compositionally biased toward pro residues. A run of 4 repeats spans residues 574-578 (SPPPE), 583-587 (SPPPE), 592-596 (SPPPE), and 610-614 (SPPPE). Residues 619–636 (LPLPVLSHLSPLPEVSRL) show a composition bias toward low complexity. Residues 637–641 (SPPPE) form repeat 15. The span at 637–677 (SPPPEESPLSPPPEDSPASPPPEASRLSPPPEDSPASPPPE) shows a compositional bias: pro residues. Low complexity predominate over residues 696–712 (DSLVSLPMEESPLSPLP). Ser-727 is modified (phosphoserine). Composition is skewed to low complexity over residues 735–755 (LCPQPEELPLSPQSEEPCLSP), 836–851 (PSQSSAPKELSLFSPS), and 876–893 (LPEELPLSLSGEPVLSPQ). Pro residues-rich tracts occupy residues 894–908 (LMPPDPLPPPLSPII), 959–973 (EPVPPMILPPSPGSP), and 985–1012 (LPPPCSPLLPHSLPPPTPPPSHCSPPAL). A compositionally biased stretch (low complexity) spans 1013–1023 (PLSVPSPLSPV). Basic and acidic residues predominate over residues 1033–1045 (AELHEMETDKGPE). 3 consecutive PHD-type zinc fingers follow at residues 1071–1124 (PSPA…PMEV), 1121–1171 (PMEV…SQGD), and 1198–1253 (LGVS…SPAR). Ser-1107 is modified (phosphoserine). Positions 1163–1172 (EISNLSQGDA) are enriched in polar residues. The RING-type 3; atypical zinc finger occupies 1201-1251 (STDVSPARDEGSLRLCTDSLPETDDSLLCDTGTATSGGKAEGDKGRRRSSP). Position 1205 is a phosphoserine (Ser-1205). Position 1223 is a phosphothreonine (Thr-1223). Ser-1226 carries the post-translational modification Phosphoserine. Positions 1245–1258 (GRRRSSPARSRIKQ) are enriched in basic residues. Position 1562 is a phosphoserine (Ser-1562). Disordered stretches follow at residues 1566–1721 (KRRQ…SKLE), 1751–1846 (GRPG…MESK), 1886–1962 (GLAL…SLQR), and 2095–2641 (SADG…QRQR). The segment covering 1593-1608 (PDDKKDGDLDTDDLLK) has biased composition (basic and acidic residues). Ser-1627 is subject to Phosphoserine. The span at 1631-1641 (ELGKEETEESK) shows a compositional bias: basic and acidic residues. Composition is skewed to basic residues over residues 1658–1668 (RQRKSHTRVKR) and 1709–1718 (KQQRRARKKS). Residues 1762–1782 (PRADGGSDRKELMTAMHKGDD) are compositionally biased toward basic and acidic residues. Ser-1791 is subject to Phosphoserine. Phosphothreonine is present on Thr-1822. The segment covering 1831-1846 (DLDRIPTEELPKMESK) has biased composition (basic and acidic residues). 2 stretches are compositionally biased toward low complexity: residues 1886–1896 (GLALGSLPSSS) and 1936–1947 (TTPSTPTTPTTE). The span at 2151-2166 (PTYPPYPSPTGAPAQP) shows a compositional bias: pro residues. Positions 2170-2181 (GTTTRPGTGQPG) are enriched in low complexity. Position 2196 is a phosphoserine (Ser-2196). Residue Thr-2197 is modified to Phosphothreonine. Residue Lys-2203 is modified to N6-acetyllysine. 2 positions are modified to phosphoserine: Ser-2217 and Ser-2231. A compositionally biased stretch (basic and acidic residues) spans 2237-2249 (ESRKSLEVKKEEL). Phosphoserine occurs at positions 2266, 2268, and 2299. Composition is skewed to pro residues over residues 2308 to 2322 (EPPPAQALAPSPPSH) and 2331 to 2359 (YPDPYAQPPLTPRPQPPPPESCCAPPPRS). The span at 2366–2388 (SRVPASPQSQSSSQSPLTPRPLS) shows a compositional bias: low complexity. The span at 2470–2486 (GQPTNFARSPGTGTFVG) shows a compositional bias: polar residues. At Arg-2492 the chain carries Asymmetric dimethylarginine. Pro residues predominate over residues 2504 to 2514 (LKPPVPQPGLP). Positions 2546-2557 (PSGSPLGPNSGP) are enriched in low complexity. The residue at position 2597 (Ser-2597) is a Phosphoserine. Residues 2610–2622 (SSSSLATPELSSA) are compositionally biased toward low complexity. Residues 2627–2665 (ISSLSQTELEKQRQRQRLRELLIRQQIQRNTLRQEKETA) adopt a coiled-coil conformation. The LXXLL motif 1 signature appears at 2644–2648 (LRELL). The disordered stretch occupies residues 2655–2806 (RNTLRQEKET…QLWQQQQQQQ (152 aa)). Low complexity predominate over residues 2665 to 2680 (AAAAAGAVGPPGNWGA). Composition is skewed to polar residues over residues 2691–2704 (SRGQTPFTGSQDRS) and 2739–2748 (PSSMDMNSRQ). Positions 2768-2813 (LQQQQQQQQQQQQQQQQQQQQQQQQQQQQQLWQQQQQQQQQQQQQA) form a coiled coil. Low complexity predominate over residues 2769–2806 (QQQQQQQQQQQQQQQQQQQQQQQQQQQQQLWQQQQQQQ). Residue Arg-2829 is modified to Asymmetric dimethylarginine. The LXXLL motif 2 signature appears at 3030–3034 (LDDLL). A disordered region spans residues 3069–3104 (NEKAEREALLRGVEPVSLGPEERPPPAPDNSEPRLT). Lys-3071 bears the N6-acetyllysine mark. Residues Ser-3122 and Ser-3193 each carry the phosphoserine modification. Disordered stretches follow at residues 3129-3193 (NTPK…LNPS) and 3271-3326 (QQQQ…QSMV). Positions 3271–3284 (QQQQQQQQQQQQQQ) are enriched in low complexity. Lys-3430 carries the post-translational modification N6-acetyllysine. 4 disordered regions span residues 3460-3496 (SGGSGSDLQNHVAPGSGQERNAGDPAQPRPNPPTFAQ), 3593-3617 (RNKQQQQQQQQQQQQQQQHSAVLAV), 3633-3661 (LLPAHGLQPPQAPPGGQAGGLRLPPGGMV), and 3678-3704 (QQQQQHSGVAGSLTGPPGSFFPGNLAL). The stretch at 3559–3613 (EKLKLVTEQQSKIQKQLDQVRKQQKEHTNLMAEYRNKQQQQQQQQQQQQQQQHSA) forms a coiled coil. Positions 3596 to 3610 (QQQQQQQQQQQQQQQ) are enriched in low complexity. A coiled-coil region spans residues 3712 to 3747 (RLLQERQLQLQQQRMQLAQKLQQQQQQQQQQQQQQH). An Asymmetric dimethylarginine modification is found at Arg-3725. Disordered regions lie at residues 3760–3780 (PGVQNQALGPKPQGLLPPSNH) and 3808–3827 (LQQQQQQQQHSGALGPQGPH). Coiled coils occupy residues 3854–3883 (RLLTAQQQQQQQQQQQQQQQQQQQQQQQQQ) and 3912–4052 (SLQQ…QVTL). Residues 4053–4249 (GPGLPVKPLQ…QGPPGAGVMP (197 aa)) form a disordered region. Composition is skewed to low complexity over residues 4128 to 4159 (SQLLLVQSQAQSQATSVQLQPPLRLPGQPQPQ), 4172 to 4183 (GQQLGSGSSSES), and 4226 to 4240 (GSQPPKSGPAPQSGQ). Arg-4255 carries the post-translational modification Asymmetric dimethylarginine. At Ser-4272 the chain carries Phosphoserine. The LXXLL motif 3 signature appears at 4279 to 4283 (LQALL). The tract at residues 4290 to 4452 (QSQAVRQTPP…SSLVPGHLDQ (163 aa)) is disordered. Residues 4294-4305 (VRQTPPFQEPGT) are compositionally biased toward polar residues. The segment covering 4307–4322 (PSPLQGLLGCQPQPGG) has biased composition (low complexity). The LXXLL motif 4 signature appears at 4310–4314 (LQGLL). Residues 4379-4391 (QLPSPSAQLTPTH) are compositionally biased toward polar residues. Phosphoserine is present on Ser-4410. Over residues 4432–4445 (DNLTEAQKPEQSSL) the composition is skewed to polar residues. The LXXLL motif 5 motif lies at 4514–4518 (LQKLL). Position 4516 is an N6-acetyllysine (Lys-4516). Disordered stretches follow at residues 4553–4596 (LQGT…EDGV), 4664–4716 (KNNL…EGAL), and 4729–4778 (AALP…QLGS). The span at 4670-4684 (PPTPPSSLPPTPPPS) shows a compositional bias: pro residues. At Ser-4789 the chain carries Phosphoserine. A Glycyl lysine isopeptide (Lys-Gly) (interchain with G-Cter in SUMO2) cross-link involves residue Lys-4807. Lys-4827 carries the N6-acetyllysine modification. The segment at 4829–4874 (KGSEVSVMLTVSAAAAKNLNGVMVAVAELLSMKIPNSYEVLFPDGP) adopts an RING-type 4; degenerate zinc-finger fold. The tract at residues 4877–4908 (AGLEPKKGEAEGPGGKEKGLSGKGPDTGPDWL) is disordered. The span at 4879–4896 (LEPKKGEAEGPGGKEKGL) shows a compositional bias: basic and acidic residues. Lys-4931 participates in a covalent cross-link: Glycyl lysine isopeptide (Lys-Gly) (interchain with G-Cter in SUMO2). The tract at residues 4956–5031 (QLSAPPPEEP…SEDSRPPRLK (76 aa)) is disordered. A compositionally biased stretch (pro residues) spans 4959 to 4982 (APPPEEPSPPPSPLAPSPASPPAE). The span at 5017–5027 (RPPEESEDSRP) shows a compositional bias: basic and acidic residues. The short motif at 5041–5045 (LRLLL) is the LXXLL motif 6 element. Residues 5080–5120 (NRRCCFCHEEGDGATDGPARLLNLDLDLWVHLNCALWSTEV) form a C2HC pre-PHD-type 2 zinc finger. The PHD-type 7 zinc-finger motif lies at 5141-5188 (TKCSLCQRTGATSSCNRMRCPNVYHFACAIRAKCMFFKDKTMLCPVHK). The FYR N-terminal domain maps to 5226–5286 (LHMFRVGGLV…CCYRCSISEN (61 aa)). The region spanning 5287–5372 (NGRPEFVIKV…ESCQNYLFRY (86 aa)) is the FYR C-terminal domain. A WDR5 interaction motif (WIN) motif is present at residues 5388 to 5393 (GCARSE). An SET domain is found at 5448 to 5564 (NNVYLARSRI…KGEELTYDYQ (117 aa)). S-adenosyl-L-methionine-binding positions include Tyr-5502 and 5525–5526 (NH). Zn(2+)-binding residues include Cys-5528, Cys-5576, Cys-5578, and Cys-5583. The Post-SET domain occupies 5572–5588 (HKIPCHCGAWNCRKWMN).

This sequence belongs to the class V-like SAM-binding methyltransferase superfamily. Histone-lysine methyltransferase family. TRX/MLL subfamily. In terms of assembly, component of the MLL2 complex (also named ASCOM complex), at least composed of catalytic subunit KMT2D/MLL2, ASH2L, RBBP5, WDR5, NCOA6, DPY30, KDM6A, PAXIP1/PTIP, PAGR1 and alpha- and beta-tubulin. Forms a core complex with the evolutionary conserved subcomplex WRAD composed of WDR5, RBBP5, ASH2L/ASH2 and DPY30 subunits; WRAD differentially stimulates the methyltransferase activity. Interacts with ESR1; interaction is direct. Interacts (via WIN motif) with WDR5.

It localises to the nucleus. It catalyses the reaction L-lysyl(4)-[histone H3] + S-adenosyl-L-methionine = N(6)-methyl-L-lysyl(4)-[histone H3] + S-adenosyl-L-homocysteine + H(+). Its function is as follows. Histone methyltransferase that catalyzes methyl group transfer from S-adenosyl-L-methionine to the epsilon-amino group of 'Lys-4' of histone H3 (H3K4). Part of chromatin remodeling machinery predominantly forms H3K4me1 methylation marks at active chromatin sites where transcription and DNA repair take place. Acts as a coactivator for estrogen receptor by being recruited by ESR1, thereby activating transcription. In Mus musculus (Mouse), this protein is Histone-lysine N-methyltransferase 2D (Kmt2d).